A 147-amino-acid polypeptide reads, in one-letter code: MLEMGRRVMVAGTFDIIHEGHIKMLWSAKSLAGDDGELVVVVARDENVRKYKKREPILEESIRAYIVKNLKPVDRVVLGERDPIESVLKLRPDVIALGYDQWADENWLREELLKRGLNVEIVRLPRFGDSSSSSIVRRVIKLFCSSE.

Residues 13–14 (TF), 18–21 (HEGH), D100, and F127 contribute to the ATP site.

Belongs to the archaeal FAD synthase family. Homodimer. A divalent metal cation serves as cofactor.

It carries out the reaction FMN + ATP + H(+) = FAD + diphosphate. Its pathway is cofactor biosynthesis; FAD biosynthesis; FAD from FMN: step 1/1. Functionally, catalyzes the transfer of the AMP portion of ATP to flavin mononucleotide (FMN) to produce flavin adenine dinucleotide (FAD) coenzyme. This is FAD synthase from Korarchaeum cryptofilum (strain OPF8).